Reading from the N-terminus, the 428-residue chain is Enolase (428 aa).

Glutamine 163 lines the (2R)-2-phosphoglycerate pocket. Glutamate 205 acts as the Proton donor in catalysis. Aspartate 242, glutamate 286, and aspartate 313 together coordinate Mg(2+). Positions 338, 367, 368, and 389 each coordinate (2R)-2-phosphoglycerate. Lysine 338 acts as the Proton acceptor in catalysis.

Belongs to the enolase family. Mg(2+) is required as a cofactor.

It is found in the cytoplasm. It localises to the secreted. The protein resides in the cell surface. The enzyme catalyses (2R)-2-phosphoglycerate = phosphoenolpyruvate + H2O. It functions in the pathway carbohydrate degradation; glycolysis; pyruvate from D-glyceraldehyde 3-phosphate: step 4/5. Catalyzes the reversible conversion of 2-phosphoglycerate (2-PG) into phosphoenolpyruvate (PEP). It is essential for the degradation of carbohydrates via glycolysis. This Verminephrobacter eiseniae (strain EF01-2) protein is Enolase.